The primary structure comprises 301 residues: Fluoroquinolones export ATP-binding protein Rv2688c (301 aa).

Residues 18–246 (IRVRGLTFRY…RSRRRVRVEY (229 aa)) form the ABC transporter domain. Residue 52 to 59 (GPSGAGKS) coordinates ATP.

This sequence belongs to the ABC transporter superfamily. The complex is composed of 2 ATP-binding proteins (Rv2688c) and 2 transmembrane proteins (Rv2686c and Rv2687c).

It localises to the cell membrane. Its activity is regulated as follows. Inhibited by reserpine and verapamil. Functionally, part of the ABC transporter complex Rv2686c/Rv2687c/Rv2688c involved in fluoroquinolones export. Confers resistance to ciprofloxacin and, to a lesser extent, norfloxacin, moxifloxacin and sparfloxacin. Probably responsible for energy coupling to the transport system. The polypeptide is Fluoroquinolones export ATP-binding protein Rv2688c (Mycobacterium tuberculosis (strain ATCC 25618 / H37Rv)).